A 752-amino-acid polypeptide reads, in one-letter code: DNA topoisomerase 4 subunit A (752 aa).

The Topo IIA-type catalytic domain maps to 31 to 494 (LPFIGDGLKP…EAKAMSEHDM (464 aa)). The active-site O-(5'-phospho-DNA)-tyrosine intermediate is Tyr120. The tract at residues 472–492 (YGDDRRSPLREREEAKAMSEH) is disordered. Basic and acidic residues predominate over residues 473-492 (GDDRRSPLREREEAKAMSEH).

It belongs to the type II topoisomerase GyrA/ParC subunit family. ParC type 1 subfamily. Heterotetramer composed of ParC and ParE.

It is found in the cell membrane. It catalyses the reaction ATP-dependent breakage, passage and rejoining of double-stranded DNA.. Its function is as follows. Topoisomerase IV is essential for chromosome segregation. It relaxes supercoiled DNA. Performs the decatenation events required during the replication of a circular DNA molecule. The chain is DNA topoisomerase 4 subunit A from Salmonella typhimurium (strain LT2 / SGSC1412 / ATCC 700720).